Consider the following 638-residue polypeptide: Neuroendocrine convertase 2 (638 aa).

The signal sequence occupies residues 1-25; sequence MKGGCVSQWKAAAGLLFCVTVFASA. The propeptide occupies 26–109; the sequence is ERPVFTNHFL…QQEGFDRKKR (84 aa). Residues 129-453 form the Peptidase S8 domain; it reads QWYLINTGQA…YGVLDAGAMV (325 aa). Catalysis depends on charge relay system residues Asp167 and His208. Disulfide bonds link Cys225-Cys376 and Cys317-Cys347. Asn375 carries N-linked (GlcNAc...) asparagine glycosylation. Catalysis depends on Ser384, which acts as the Charge relay system. The region spanning 461-597 is the P/Homo B domain; it reads TVPERFHCVG…TLMLHGSQSA (137 aa). A disulfide bridge links Cys468 with Cys494. N-linked (GlcNAc...) asparagine glycosylation is found at Asn514 and Asn524.

The protein belongs to the peptidase S8 family. Furin subfamily.

Its subcellular location is the cytoplasmic vesicle. It is found in the secretory vesicle. The protein resides in the secreted. It carries out the reaction Release of protein hormones and neuropeptides from their precursors, generally by hydrolysis of -Lys-Arg-|- bonds.. Serine endopeptidase which is involved in the processing of hormone and other protein precursors at sites comprised of pairs of basic amino acid residues. Responsible for the release of glucagon from proglucagon in pancreatic A cells. This Sus scrofa (Pig) protein is Neuroendocrine convertase 2 (PCSK2).